The sequence spans 100 residues: Protein RADIALIS-like 1 (100 aa).

The region spanning 9 to 64 (QSSGSWTAKQNKAFEQALATYDQDTPNRWQNVAKVVGGKTTEEVKRHYELLVQDIN) is the SANT domain. Residues 73–100 (FPNYRTSGGCTNGRLSQEEKRMRNMRLQ) form a disordered region. The segment covering 76 to 87 (YRTSGGCTNGRL) has biased composition (polar residues).

It localises to the nucleus. Functionally, probable transcription factor. This Arabidopsis thaliana (Mouse-ear cress) protein is Protein RADIALIS-like 1 (RL1).